The following is a 100-amino-acid chain: Guanine nucleotide-binding protein subunit gamma 2 (100 aa).

At Met1 the chain carries N-acetylmethionine. A coiled-coil region spans residues 19–55 (TRGKHRIQAELKRLEQEARFLEEELEQLEKMDNASAS). One can recognise a G protein gamma domain in the interval 21–100 (GKHRIQAELK…EAKRCGCSIL (80 aa)). A regulates lipidation and cell membrane subcellular localization region spans residues 90-96 (KEAKRCG). Cys95 carries the S-palmitoyl cysteine lipid modification. Cys97 carries the post-translational modification Cysteine methyl ester. Cys97 is lipidated: S-farnesyl cysteine. Positions 98–100 (SIL) are cleaved as a propeptide — removed in mature form.

As to quaternary structure, g proteins are composed of 3 units, alpha, beta and gamma. GPG1 interacts with the beta subunit GB1. The dimer GB1-GG2 interacts with NDL1, NDL2 and NDL3. Binds to NUDT7. Mostly expressed in roots (excluded from the stele), seedlings (especially at the hypocotyl/root junction), floral stems, floral buds, flowers and siliques, and, to a lower extent, in leaves (restricted to guard cells). Also present in hydathods.

The protein resides in the cell membrane. Functionally, guanine nucleotide-binding proteins (G proteins) are involved as a modulator or transducer in various transmembrane signaling systems. The beta and gamma chains are required for the GTPase activity, for replacement of GDP by GTP, and for G protein-effector interaction. Involved in the abscisic acid (ABA) and ethylene signaling pathways. Regulates basipetal transport of auxin (IAA) in roots and hypocotyls, and thus modulates root architecture (e.g. lateral root formation). The heterotrimeric G-protein controls defense responses to necrotrophic and vascular fungi probably by modulating cell wall-related genes expression; involved in resistance to Plectosphaerella cucumerina. The polypeptide is Guanine nucleotide-binding protein subunit gamma 2 (GG2) (Arabidopsis thaliana (Mouse-ear cress)).